Consider the following 100-residue polypeptide: Class II hydrophobin CU (100 aa).

The signal sequence occupies residues 1 to 25 (MQFSIATIALFLSSAMAAPYSGNSN). Intrachain disulfides connect C32–C82, C42–C72, C43–C55, and C83–C94.

The protein belongs to the cerato-ulmin hydrophobin family. As to quaternary structure, homotetramer. Further self-assembles to form highly ordered films at water-air interfaces through intermolecular interactions.

It is found in the secreted. Its subcellular location is the cell wall. In terms of biological role, aerial growth, conidiation, and dispersal of filamentous fungi in the environment rely upon a capability of their secreting small amphipathic proteins called hydrophobins (HPBs) with low sequence identity. Class I can self-assemble into an outermost layer of rodlet bundles on aerial cell surfaces, conferring cellular hydrophobicity that supports fungal growth, development and dispersal; whereas Class II form highly ordered films at water-air interfaces through intermolecular interactions but contribute nothing to the rodlet structure. CU is a class II hydrophobin that is implicated in the pathogenicity of this fungus on elm trees. Required for hydrophobicity and adherence of the cells and acts as a parasitic fitness factor by protecting infectious propagules from desiccation. Reduces the interfacial tension of both oil-water and air-water interfaces. This Ophiostoma ulmi (Dutch elm disease fungus) protein is Class II hydrophobin CU.